Consider the following 120-residue polypeptide: UPF0102 protein COXBURSA331_A1934 (120 aa).

This sequence belongs to the UPF0102 family.

The chain is UPF0102 protein COXBURSA331_A1934 from Coxiella burnetii (strain RSA 331 / Henzerling II).